The chain runs to 342 residues: tRNA N6-adenosine threonylcarbamoyltransferase (342 aa).

Fe cation-binding residues include His-112 and His-116. Substrate-binding positions include 134–138, Asp-167, Gly-180, and Asn-278; that span reads IVSGG. Asp-306 contacts Fe cation.

This sequence belongs to the KAE1 / TsaD family. It depends on Fe(2+) as a cofactor.

The protein resides in the cytoplasm. It catalyses the reaction L-threonylcarbamoyladenylate + adenosine(37) in tRNA = N(6)-L-threonylcarbamoyladenosine(37) in tRNA + AMP + H(+). In terms of biological role, required for the formation of a threonylcarbamoyl group on adenosine at position 37 (t(6)A37) in tRNAs that read codons beginning with adenine. Is involved in the transfer of the threonylcarbamoyl moiety of threonylcarbamoyl-AMP (TC-AMP) to the N6 group of A37, together with TsaE and TsaB. TsaD likely plays a direct catalytic role in this reaction. The polypeptide is tRNA N6-adenosine threonylcarbamoyltransferase (Anaplasma phagocytophilum (strain HZ)).